The primary structure comprises 245 residues: Small ribosomal subunit protein uS2 (245 aa).

The protein belongs to the universal ribosomal protein uS2 family.

In Pseudomonas fluorescens (strain ATCC BAA-477 / NRRL B-23932 / Pf-5), this protein is Small ribosomal subunit protein uS2.